The sequence spans 192 residues: Rhomboid protease GlpG (192 aa).

The Cytoplasmic segment spans residues Met-1–Lys-10. A helical transmembrane segment spans residues Ile-11–Glu-31. Topologically, residues Asp-32–Thr-57 are periplasmic. The helical transmembrane segment at Leu-58–Gly-78 threads the bilayer. The Cytoplasmic portion of the chain corresponds to Met-79–Arg-82. A helical membrane pass occupies residues Thr-83–Val-103. At Gln-104–Val-107 the chain is on the periplasmic side. Residues Ser-108–Ile-128 traverse the membrane as a helical segment. The Nucleophile role is filled by Ser-116. Residues Arg-129–Glu-141 are Cytoplasmic-facing. Residues Gly-142–Val-162 form a helical membrane-spanning segment. A topological domain (periplasmic) is located at residue Glu-163. The helical transmembrane segment at Met-164–Ser-184 threads the bilayer. His-169 is an active-site residue. The Cytoplasmic segment spans residues Lys-185–Glu-192.

It belongs to the peptidase S54 family.

It is found in the cell inner membrane. The catalysed reaction is Cleaves type-1 transmembrane domains using a catalytic dyad composed of serine and histidine that are contributed by different transmembrane domains.. Its function is as follows. Rhomboid-type serine protease that catalyzes intramembrane proteolysis. The chain is Rhomboid protease GlpG (glpG) from Haemophilus influenzae (strain ATCC 51907 / DSM 11121 / KW20 / Rd).